We begin with the raw amino-acid sequence, 83 residues long: Putative defensin-like protein 110 (83 aa).

Positions 1–24 are cleaved as a signal peptide; it reads MAITKKNLIAFVFTILFVISYVHC. Cystine bridges form between C43-C81, C49-C73, C59-C79, and C63-C80.

The protein belongs to the DEFL family.

It localises to the secreted. This chain is Putative defensin-like protein 110, found in Arabidopsis thaliana (Mouse-ear cress).